The primary structure comprises 230 residues: uncharacterized protein (230 aa).

The chain crosses the membrane as a helical span at residues 93–115 (VFLYYFLIVYTSGNVDLISRFLF).

This sequence belongs to the DUP/COS family.

The protein localises to the membrane. This is an uncharacterized protein from Saccharomyces cerevisiae (strain ATCC 204508 / S288c) (Baker's yeast).